The following is a 507-amino-acid chain: Variant surface glycoprotein ILTAT 1.25 (507 aa).

An N-terminal signal peptide occupies residues Met-1–Ala-21. The span at Glu-83–Glu-95 shows a compositional bias: basic and acidic residues. The disordered stretch occupies residues Glu-83–Ala-102. N-linked (GlcNAc...) asparagine glycosylation is found at Asn-141 and Asn-371. The span at Pro-384 to Ala-395 shows a compositional bias: low complexity. A disordered region spans residues Pro-384 to Asn-474. The segment covering Pro-396–Gly-420 has biased composition (basic and acidic residues). Residues Ser-444 to Asp-455 show a composition bias toward low complexity. Residues Thr-456–Asn-474 show a composition bias toward basic and acidic residues. Asp-484 carries the GPI-anchor amidated aspartate lipid modification. Positions Ser-485 to Phe-507 are cleaved as a propeptide — removed in mature form.

Its subcellular location is the cell membrane. VSG forms a coat on the surface of the parasite. The trypanosome evades the immune response of the host by expressing a series of antigenically distinct VSGs from an estimated 1000 VSG genes. This Trypanosoma brucei brucei protein is Variant surface glycoprotein ILTAT 1.25.